The chain runs to 69 residues: Putative membrane protein insertion efficiency factor (69 aa).

The protein belongs to the UPF0161 family.

The protein localises to the cell membrane. In terms of biological role, could be involved in insertion of integral membrane proteins into the membrane. The chain is Putative membrane protein insertion efficiency factor from Thermomicrobium roseum (strain ATCC 27502 / DSM 5159 / P-2).